The sequence spans 201 residues: Protease (201 aa).

Residues His55, Asp72, and Cys122 contribute to the active site.

This sequence belongs to the peptidase C5 family. As to quaternary structure, interacts with protease cofactor pVI-C; this interaction is necessary for protease activation.

The protein resides in the virion. It localises to the host nucleus. The catalysed reaction is Cleaves proteins of the adenovirus and its host cell at two consensus sites: -Yaa-Xaa-Gly-Gly-|-Xaa- and -Yaa-Xaa-Gly-Xaa-|-Gly- (in which Yaa is Met, Ile or Leu, and Xaa is any amino acid).. Requires DNA and protease cofactor for maximal activation. Inside nascent virions, becomes partially activated by binding to the viral DNA, allowing it to cleave the cofactor that binds to the protease and fully activates it. Actin, like the viral protease cofactor, seems to act as a cofactor in the cleavage of cytokeratin 18 and of actin itself. Functionally, cleaves viral precursor proteins (pTP, pIIIa, pVI, pVII, pVIII, and pX) inside newly assembled particles giving rise to mature virions. Protease complexed to its cofactor slides along the viral DNA to specifically locate and cleave the viral precursors. Mature virions have a weakened organization compared to the unmature virions, thereby facilitating subsequent uncoating. Without maturation, the particle lacks infectivity and is unable to uncoat. Late in adenovirus infection, in the cytoplasm, may participate in the cytoskeleton destruction. Cleaves host cell cytoskeletal keratins K7 and K18. This chain is Protease, found in Pantherophis guttatus (Corn snake).